Consider the following 706-residue polypeptide: Polyribonucleotide nucleotidyltransferase (706 aa).

Residues D487 and D493 each contribute to the Mg(2+) site. Residues P553–I612 enclose the KH domain. In terms of domain architecture, S1 motif spans G622 to K692.

The protein belongs to the polyribonucleotide nucleotidyltransferase family. The cofactor is Mg(2+).

Its subcellular location is the cytoplasm. It catalyses the reaction RNA(n+1) + phosphate = RNA(n) + a ribonucleoside 5'-diphosphate. In terms of biological role, involved in mRNA degradation. Catalyzes the phosphorolysis of single-stranded polyribonucleotides processively in the 3'- to 5'-direction. The polypeptide is Polyribonucleotide nucleotidyltransferase (Neisseria gonorrhoeae (strain ATCC 700825 / FA 1090)).